A 328-amino-acid polypeptide reads, in one-letter code: Tetraacyldisaccharide 4'-kinase (328 aa).

58–65 (TMGGAGKT) is an ATP binding site.

Belongs to the LpxK family.

The catalysed reaction is a lipid A disaccharide + ATP = a lipid IVA + ADP + H(+). It functions in the pathway glycolipid biosynthesis; lipid IV(A) biosynthesis; lipid IV(A) from (3R)-3-hydroxytetradecanoyl-[acyl-carrier-protein] and UDP-N-acetyl-alpha-D-glucosamine: step 6/6. Transfers the gamma-phosphate of ATP to the 4'-position of a tetraacyldisaccharide 1-phosphate intermediate (termed DS-1-P) to form tetraacyldisaccharide 1,4'-bis-phosphate (lipid IVA). The polypeptide is Tetraacyldisaccharide 4'-kinase (Phenylobacterium zucineum (strain HLK1)).